A 75-amino-acid polypeptide reads, in one-letter code: MARFYRRRKFCRFTAENVAYIDYKDIDTLKQYITENGKIVPSRITGTKARYQRQLALAIKQARYLALIPYTDNHK.

The protein belongs to the bacterial ribosomal protein bS18 family. In terms of assembly, part of the 30S ribosomal subunit. Forms a tight heterodimer with protein bS6.

Its function is as follows. Binds as a heterodimer with protein bS6 to the central domain of the 16S rRNA, where it helps stabilize the platform of the 30S subunit. This is Small ribosomal subunit protein bS18 from Acinetobacter baylyi (strain ATCC 33305 / BD413 / ADP1).